A 238-amino-acid polypeptide reads, in one-letter code: Ribonuclease HII (238 aa).

The RNase H type-2 domain maps to 12–197; the sequence is GIVAGVDEAG…VLELLTDDLL (186 aa). Positions 18, 19, and 107 each coordinate a divalent metal cation.

This sequence belongs to the RNase HII family. Mn(2+) serves as cofactor. It depends on Mg(2+) as a cofactor.

The protein resides in the cytoplasm. It carries out the reaction Endonucleolytic cleavage to 5'-phosphomonoester.. Its function is as follows. Endonuclease that specifically degrades the RNA of RNA-DNA hybrids. The sequence is that of Ribonuclease HII from Thermotoga petrophila (strain ATCC BAA-488 / DSM 13995 / JCM 10881 / RKU-1).